Reading from the N-terminus, the 545-residue chain is Hydroxylamine reductase (545 aa).

4 residues coordinate [4Fe-4S] cluster: C3, C6, C15, and C21. Hybrid [4Fe-2O-2S] cluster contacts are provided by H240, E264, C309, C401, C429, C454, E488, and K490. C401 is subject to Cysteine persulfide.

Belongs to the HCP family. Requires [4Fe-4S] cluster as cofactor. Hybrid [4Fe-2O-2S] cluster is required as a cofactor.

The protein localises to the cytoplasm. The enzyme catalyses A + NH4(+) + H2O = hydroxylamine + AH2 + H(+). In terms of biological role, catalyzes the reduction of hydroxylamine to form NH(3) and H(2)O. This is Hydroxylamine reductase from Rippkaea orientalis (strain PCC 8801 / RF-1) (Cyanothece sp. (strain PCC 8801)).